The following is a 161-amino-acid chain: Nascent polypeptide-associated complex subunit beta (161 aa).

Disordered regions lie at residues 14-41 (LSAN…KDDS) and 125-161 (QNAQ…ADVE). One can recognise an NAC-A/B domain in the interval 37-102 (NKDDSKLQAQ…PQEKSLQDLF (66 aa)). Positions 125-134 (QNAQAAAPAT) are enriched in low complexity. A compositionally biased stretch (basic and acidic residues) spans 135-146 (EGHEAGEKKDND).

Belongs to the NAC-beta family. As to quaternary structure, part of the nascent polypeptide-associated complex (NAC), consisting of EGD2 and EGD1. NAC associates with ribosomes via EGD1.

The protein localises to the cytoplasm. The protein resides in the nucleus. Component of the nascent polypeptide-associated complex (NAC), a dynamic component of the ribosomal exit tunnel, protecting the emerging polypeptides from interaction with other cytoplasmic proteins to ensure appropriate nascent protein targeting. The NAC complex also promotes mitochondrial protein import by enhancing productive ribosome interactions with the outer mitochondrial membrane and blocks the inappropriate interaction of ribosomes translating non-secretory nascent polypeptides with translocation sites in the membrane of the endoplasmic reticulum. EGD1 may act as a transcription factor that exert a negative effect on the expression of several genes that are transcribed by RNA polymerase II. This is Nascent polypeptide-associated complex subunit beta (EGD1) from Eremothecium gossypii (strain ATCC 10895 / CBS 109.51 / FGSC 9923 / NRRL Y-1056) (Yeast).